A 293-amino-acid polypeptide reads, in one-letter code: MNSGFFLSPPNYDSPAELKSLLETLGFAMQKKFGQNFLIDKKTRENLISFLTLDKGTRVWEVGPGLGAMTYLLLEKGVHLTAFEIDKGFISLLKKIFLENSKQNFTLIEGDVQKNWLPYLIEHGKPNVFFGNLPYNIASDLIASTVEAGVVFDTMLFTVQKEAAERITARPGNKNYTAFSVLCSLFYECKIVKTIPASAFWPQPNVESAAVLFKAKKEFAEYKNFKLFIKIVKALFSSRRKNIKNNLGSWMKSNGYGDKIDLVLERSGLSGNLRAESLALYDFLLLSDIIGHL.

6 residues coordinate S-adenosyl-L-methionine: asparagine 36, leucine 38, glycine 63, glutamate 84, aspartate 111, and asparagine 132.

It belongs to the class I-like SAM-binding methyltransferase superfamily. rRNA adenine N(6)-methyltransferase family. RsmA subfamily.

Its subcellular location is the cytoplasm. The catalysed reaction is adenosine(1518)/adenosine(1519) in 16S rRNA + 4 S-adenosyl-L-methionine = N(6)-dimethyladenosine(1518)/N(6)-dimethyladenosine(1519) in 16S rRNA + 4 S-adenosyl-L-homocysteine + 4 H(+). In terms of biological role, specifically dimethylates two adjacent adenosines (A1518 and A1519) in the loop of a conserved hairpin near the 3'-end of 16S rRNA in the 30S particle. May play a critical role in biogenesis of 30S subunits. The polypeptide is Ribosomal RNA small subunit methyltransferase A (Treponema denticola (strain ATCC 35405 / DSM 14222 / CIP 103919 / JCM 8153 / KCTC 15104)).